The sequence spans 30 residues: Putative alpha-amylase inhibitor (30 aa).

The protein belongs to the leguminous lectin family.

Functionally, lectin and alpha-amylase inhibitor. Acts as a defensive protein against insects. The chain is Putative alpha-amylase inhibitor from Phaseolus vulgaris (Kidney bean).